Here is a 1482-residue protein sequence, read N- to C-terminus: Chromosome partition protein MukB (1482 aa).

34–41 (GGNGAGKS) is a binding site for ATP. The stretch at 333–665 (ASDHLNLVQT…LEKQIERLSQ (333 aa)) forms a coiled coil. Positions 666–783 (PSGAEDSRMI…ELPLFGRAAR (118 aa)) are flexible hinge. Coiled coils occupy residues 784–1116 (ENRL…AKAG) and 1209–1260 (VDAI…MLNQ).

Belongs to the SMC family. MukB subfamily. As to quaternary structure, homodimerization via its hinge domain. Binds to DNA via its C-terminal region. Interacts, and probably forms a ternary complex, with MukE and MukF via its C-terminal region. The complex formation is stimulated by calcium or magnesium. Interacts with tubulin-related protein FtsZ.

The protein resides in the cytoplasm. It localises to the nucleoid. In terms of biological role, plays a central role in chromosome condensation, segregation and cell cycle progression. Functions as a homodimer, which is essential for chromosome partition. Involved in negative DNA supercoiling in vivo, and by this means organize and compact chromosomes. May achieve or facilitate chromosome segregation by condensation DNA from both sides of a centrally located replisome during cell division. This is Chromosome partition protein MukB from Photorhabdus laumondii subsp. laumondii (strain DSM 15139 / CIP 105565 / TT01) (Photorhabdus luminescens subsp. laumondii).